Reading from the N-terminus, the 158-residue chain is Small ribosomal subunit protein uS7 (158 aa).

It belongs to the universal ribosomal protein uS7 family. Part of the 30S ribosomal subunit. Contacts proteins S9 and S11.

Functionally, one of the primary rRNA binding proteins, it binds directly to 16S rRNA where it nucleates assembly of the head domain of the 30S subunit. Is located at the subunit interface close to the decoding center, probably blocks exit of the E-site tRNA. This Porphyromonas gingivalis (strain ATCC 33277 / DSM 20709 / CIP 103683 / JCM 12257 / NCTC 11834 / 2561) protein is Small ribosomal subunit protein uS7.